The chain runs to 1409 residues: MKSLLDLFKQFTPDEHFDAIKIGLASPEKIRSWSFGEVKKPETINYRTFKPERDGLFCAKIFGPIKDYECLCGKYKRLKHRGVICEKCGVEVTQTKVRRERMGHIDLAAPCAHIWFLKSLPSRLGLVLDMTLRDIERVLYFEAYVVTDPGMTPLKKFSIMTEDDYEAKRTEYGDEFEAKMGAEGIKDLLEGIDIDVETERLRGDLTGSEVKVKKNAKRLKLLEAFKKSGIKPGWMVMEVLPVLPPDLRPLVPLDGGRFATSDLNDLYRRVINRNSRLRRLLELKAPEIIARNEKRMLQEAVDSLLDNGRRGKAMTGANKRALKSLADMIKGKSGRFRQNLLGKRVDYSGRSVITVGPYLKLHQCGLPKLMALELFKPFIFAQLEQRGIATTIKAAKKEVESGTPVVWDILEEVIKEHPVMLNRAPTLHRLGIQAFEPILIEGKAIQLHPLVCAAFNADFDGDQMAVHVPLSVEAQMEARTLMLASNNVLFPASGEPSIVPSQDVVLGLYHATRERINGKGEGMIFADIGEVQRALDSDQVELAAKISVRLTEWTKNKDSGEFEPSTSLVETTVGRALMSEILPKGLPFSHMNKALKKKEISKLINASFRKCGLKATVVFADKLLQNGFRLSTHAGISIAIGDMLVPPQKAEIIGRAEAEVKEIEQQYVSGLVTAGERYNKVVDIWGKAGDEVSKVMMAQLAKEKVIDRHGNEVEQESFNAIYMMADSGARGSAAQIRQLAGMRGLMAKPDGSIIETPITANFREGLNVLQYFISTHGARKGLADTALKTANSGYLTRRLVDVTQDLVVNEDDCGTTNGALMRAIVEGGEVIESLRDRVLGRTTAEDVVHPETLAVLLPAGTLLNEDGIDELELQGVDEIKVRTALTCETRYGLCAKCYGRDLGRGGLINLGEAVGVIAAQSIGEPGTQLTMRTFHIGGAASRAAIASSVEAKSNGSISFNSTMRYVSNTKGELVVISRSGEIVISDNGRERERHKVPYGAVLTVRPDQQVKAGLILANWDPLTRPIITEYAGQVRFENVEEGLTVAKQVDEVTGLSTLVVIDPKRRGSAKVVRPQVKLIDANNQEVKIPGTDHSVTIGFQVGALIQVRDGQDVGPGEVLARIPVEGQKTRDITGGLPRVAELFEARTPKDKGTLAEMTGTISFGKETKGKVRMQITDLDGKVWEELVPKEKNILVHEGQVVNKGESIVDGPADPQDILRLLGIEELSRYIVDEVQDVYRLQGVKINDKHIEVIVRQMLRRVVVENTGDSTYIAGEQVERSEILNTNEALQREGKIPATYSNVLLGITKASLSTDSFISAASFQETTRVLTEAAIMGKRDELRGLKENVIVGRLIPAGTGLAYHQARKAKDAMDDAERRAIADAEAAELAGVMADDDTAAVSVAGDASAD.

Cys70, Cys72, Cys85, and Cys88 together coordinate Zn(2+). Asp458, Asp460, and Asp462 together coordinate Mg(2+). Cys813, Cys887, Cys894, and Cys897 together coordinate Zn(2+).

Belongs to the RNA polymerase beta' chain family. In terms of assembly, the RNAP catalytic core consists of 2 alpha, 1 beta, 1 beta' and 1 omega subunit. When a sigma factor is associated with the core the holoenzyme is formed, which can initiate transcription. Mg(2+) is required as a cofactor. The cofactor is Zn(2+).

The enzyme catalyses RNA(n) + a ribonucleoside 5'-triphosphate = RNA(n+1) + diphosphate. Its function is as follows. DNA-dependent RNA polymerase catalyzes the transcription of DNA into RNA using the four ribonucleoside triphosphates as substrates. The protein is DNA-directed RNA polymerase subunit beta' of Delftia acidovorans (strain DSM 14801 / SPH-1).